Reading from the N-terminus, the 398-residue chain is MKTWIFICMSIAMLLWFLSTLRRKPSQKKGCIDAIIPAYNEGPCLAQSLDNLLRNPYFCRVICVNDGSTDNTEAVMAEVKRKWGDRFVAVTQKNTGKGGALMNGLNYATCDQVFLSDADTYVPPDQDGMGYMLAEIERGADAVGGIPSTALKGAGLLPHIRATVKLPMIVMKRTLQQLLGGAPFIISGACGMFRTDVLRKFGFSDRTKVEDLDLTWTLVANGYRIRQANRCIVYPQECNSPREEWRRWRRWIVGYAVCMRLHKRLLFSRFGIFSIFPMLLVVLYGVGIYLTTWFNEFITTGPHGVVLAMFPLIWVGVVCVIGAFSAWFHRCWLLVPLAPLSVVYVLLAYAIWIIYGLIAFFTGREPQRDKPTRYSALVEASTAYSQPSVTGTEKLSEA.

The protein belongs to the glycosyltransferase 2 family.

This is an uncharacterized protein from Escherichia coli (strain K12).